A 306-amino-acid chain; its full sequence is Pantothenate kinase (306 aa).

91–98 (GSVAVGKS) contacts ATP.

The protein belongs to the prokaryotic pantothenate kinase family.

The protein resides in the cytoplasm. The catalysed reaction is (R)-pantothenate + ATP = (R)-4'-phosphopantothenate + ADP + H(+). It participates in cofactor biosynthesis; coenzyme A biosynthesis; CoA from (R)-pantothenate: step 1/5. This is Pantothenate kinase (coaA) from Streptococcus pyogenes serotype M18 (strain MGAS8232).